Here is a 100-residue protein sequence, read N- to C-terminus: Large ribosomal subunit protein bL21 (100 aa).

Belongs to the bacterial ribosomal protein bL21 family. As to quaternary structure, part of the 50S ribosomal subunit. Contacts protein L20.

In terms of biological role, this protein binds to 23S rRNA in the presence of protein L20. The polypeptide is Large ribosomal subunit protein bL21 (Corynebacterium urealyticum (strain ATCC 43042 / DSM 7109)).